Here is a 177-residue protein sequence, read N- to C-terminus: Large ribosomal subunit protein uL10 (177 aa).

Belongs to the universal ribosomal protein uL10 family. In terms of assembly, part of the ribosomal stalk of the 50S ribosomal subunit. The N-terminus interacts with L11 and the large rRNA to form the base of the stalk. The C-terminus forms an elongated spine to which L12 dimers bind in a sequential fashion forming a multimeric L10(L12)X complex.

Forms part of the ribosomal stalk, playing a central role in the interaction of the ribosome with GTP-bound translation factors. This Legionella pneumophila (strain Corby) protein is Large ribosomal subunit protein uL10.